We begin with the raw amino-acid sequence, 234 residues long: Triosephosphate isomerase (234 aa).

8–10 (NFK) is a substrate binding site. The Electrophile role is filled by H90. E159 serves as the catalytic Proton acceptor. Substrate-binding residues include G165 and S197.

Belongs to the triosephosphate isomerase family. In terms of assembly, homodimer.

Its subcellular location is the cytoplasm. It carries out the reaction D-glyceraldehyde 3-phosphate = dihydroxyacetone phosphate. The protein operates within carbohydrate biosynthesis; gluconeogenesis. It participates in carbohydrate degradation; glycolysis; D-glyceraldehyde 3-phosphate from glycerone phosphate: step 1/1. Functionally, involved in the gluconeogenesis. Catalyzes stereospecifically the conversion of dihydroxyacetone phosphate (DHAP) to D-glyceraldehyde-3-phosphate (G3P). This Helicobacter acinonychis (strain Sheeba) protein is Triosephosphate isomerase.